We begin with the raw amino-acid sequence, 246 residues long: Tyrosine recombinase XerD-like (246 aa).

A Core-binding (CB) domain is found at 1–72 (MINDINNFIE…AVNQFLFFLY (72 aa)). A Tyr recombinase domain is found at 84–246 (QETEKITLTQ…TPITLERYYR (163 aa)). Active-site residues include K149 and R212. Y244 serves as the catalytic O-(3'-phospho-DNA)-tyrosine intermediate.

It belongs to the 'phage' integrase family. XerD-like subfamily.

Its subcellular location is the cytoplasm. Putative tyrosine recombinase. Not involved in the cutting and rejoining of the recombining DNA molecules on dif(SL) site. This is Tyrosine recombinase XerD-like from Streptococcus agalactiae serotype III (strain NEM316).